Here is a 473-residue protein sequence, read N- to C-terminus: Photosystem II CP43 reaction center protein (473 aa).

Positions 1-14 (MKILYSLRRFYHVE) are excised as a propeptide. N-acetylthreonine is present on Thr15. Thr15 carries the phosphothreonine modification. The next 5 membrane-spanning stretches (helical) occupy residues 69 to 93 (LFEVAHFVPEKPMYEQGLILLPHLA), 134 to 155 (LLGPETLEESFPFFGYVWKDRN), 178 to 200 (KALYFGGVYDTWAPGGGDVRKIT), 255 to 275 (KPFAWARRAFVWSGEAYLSYS), and 291 to 312 (WFNNTAYPSEFYGPTGPEASQA). Glu367 is a [CaMn4O5] cluster binding site. A helical membrane pass occupies residues 447–471 (RARAAAAGFEKGIDRDLEPVLYMTP).

Belongs to the PsbB/PsbC family. PsbC subfamily. As to quaternary structure, PSII is composed of 1 copy each of membrane proteins PsbA, PsbB, PsbC, PsbD, PsbE, PsbF, PsbH, PsbI, PsbJ, PsbK, PsbL, PsbM, PsbT, PsbX, PsbY, PsbZ, Psb30/Ycf12, at least 3 peripheral proteins of the oxygen-evolving complex and a large number of cofactors. It forms dimeric complexes. Binds multiple chlorophylls and provides some of the ligands for the Ca-4Mn-5O cluster of the oxygen-evolving complex. It may also provide a ligand for a Cl- that is required for oxygen evolution. PSII binds additional chlorophylls, carotenoids and specific lipids. is required as a cofactor.

It is found in the plastid. It localises to the chloroplast thylakoid membrane. Its function is as follows. One of the components of the core complex of photosystem II (PSII). It binds chlorophyll and helps catalyze the primary light-induced photochemical processes of PSII. PSII is a light-driven water:plastoquinone oxidoreductase, using light energy to abstract electrons from H(2)O, generating O(2) and a proton gradient subsequently used for ATP formation. The polypeptide is Photosystem II CP43 reaction center protein (Sorghum bicolor (Sorghum)).